The sequence spans 472 residues: Argininosuccinate lyase (472 aa).

This sequence belongs to the lyase 1 family. Argininosuccinate lyase subfamily.

The protein localises to the cytoplasm. It catalyses the reaction 2-(N(omega)-L-arginino)succinate = fumarate + L-arginine. It functions in the pathway amino-acid biosynthesis; L-arginine biosynthesis; L-arginine from L-ornithine and carbamoyl phosphate: step 3/3. This is Argininosuccinate lyase from Maricaulis maris (strain MCS10) (Caulobacter maris).